Reading from the N-terminus, the 294-residue chain is Pyridoxal 5'-phosphate synthase subunit PdxS (294 aa).

Asp24 provides a ligand contact to D-ribose 5-phosphate. Residue Lys81 is the Schiff-base intermediate with D-ribose 5-phosphate of the active site. Gly153 is a binding site for D-ribose 5-phosphate. Residue Arg165 coordinates D-glyceraldehyde 3-phosphate. D-ribose 5-phosphate contacts are provided by residues Gly214 and 235–236 (GS).

Belongs to the PdxS/SNZ family. Homohexamer and homododecamer. In the presence of PdxT, forms a dodecamer of heterodimers.

The enzyme catalyses aldehydo-D-ribose 5-phosphate + D-glyceraldehyde 3-phosphate + L-glutamine = pyridoxal 5'-phosphate + L-glutamate + phosphate + 3 H2O + H(+). It functions in the pathway cofactor biosynthesis; pyridoxal 5'-phosphate biosynthesis. Functionally, catalyzes the formation of pyridoxal 5'-phosphate from ribose 5-phosphate (RBP), glyceraldehyde 3-phosphate (G3P) and ammonia. The ammonia is provided by the PdxT subunit. Can also use ribulose 5-phosphate and dihydroxyacetone phosphate as substrates, resulting from enzyme-catalyzed isomerization of RBP and G3P, respectively. This chain is Pyridoxal 5'-phosphate synthase subunit PdxS, found in Geobacillus kaustophilus (strain HTA426).